The sequence spans 496 residues: Angiopoietin-2 (496 aa).

The N-terminal stretch at 1-18 is a signal peptide; the sequence is MWQIVFFTLSCDLVLAAA. 6 N-linked (GlcNAc...) asparagine glycosylation sites follow: asparagine 89, asparagine 119, asparagine 133, asparagine 151, asparagine 240, and asparagine 304. Residues 166–248 are a coiled coil; the sequence is STNKLEKQIL…VNNSVLQKQQ (83 aa). The Fibrinogen C-terminal domain occupies 275–495; that stretch reads KEEQISFRDC…ATTMMIRPAD (221 aa). Cysteine 284 and cysteine 313 are oxidised to a cystine. Residues aspartate 429, aspartate 431, cysteine 433, and cysteine 435 each coordinate Ca(2+). 2 disulfide bridges follow: cysteine 433/cysteine 435 and cysteine 437/cysteine 450.

As to quaternary structure, interacts with TEK/TIE2, competing for the same binding site as ANGPT1. Interacts with ITGA5. Interacts with SVEP1/polydom. Interacts with THBD; this interaction significantly inhibits the generation of activated PC and TAFIa/CPB2 by the thrombin/thrombomodulin complex.

The protein resides in the secreted. Its function is as follows. Binds to TEK/TIE2, competing for the ANGPT1 binding site, and modulating ANGPT1 signaling. Can induce tyrosine phosphorylation of TEK/TIE2 in the absence of ANGPT1. In the absence of angiogenic inducers, such as VEGF, ANGPT2-mediated loosening of cell-matrix contacts may induce endothelial cell apoptosis with consequent vascular regression. In concert with VEGF, it may facilitate endothelial cell migration and proliferation, thus serving as a permissive angiogenic signal. Involved in the regulation of lymphangiogenesis. This Homo sapiens (Human) protein is Angiopoietin-2 (ANGPT2).